Reading from the N-terminus, the 258-residue chain is Phosphate import ATP-binding protein PstB 1 (258 aa).

One can recognise an ABC transporter domain in the interval 5–247; sequence LDLTDVNIYY…EKIFSNPNQK (243 aa). 37 to 44 provides a ligand contact to ATP; sequence GPSGCGKT.

It belongs to the ABC transporter superfamily. Phosphate importer (TC 3.A.1.7) family. In terms of assembly, the complex is composed of two ATP-binding proteins (PstB), two transmembrane proteins (PstC and PstA) and a solute-binding protein (PstS).

The protein resides in the cell membrane. It carries out the reaction phosphate(out) + ATP + H2O = ADP + 2 phosphate(in) + H(+). Its function is as follows. Part of the ABC transporter complex PstSACB involved in phosphate import. Responsible for energy coupling to the transport system. The polypeptide is Phosphate import ATP-binding protein PstB 1 (Mycobacterium tuberculosis (strain CDC 1551 / Oshkosh)).